Consider the following 144-residue polypeptide: Large ribosomal subunit protein uL15 (144 aa).

The segment at 1-25 is disordered; sequence MFLNTIGARDGSRPEKKRVGRGIGS.

This sequence belongs to the universal ribosomal protein uL15 family. Part of the 50S ribosomal subunit.

Its function is as follows. Binds to the 23S rRNA. The protein is Large ribosomal subunit protein uL15 of Methylococcus capsulatus (strain ATCC 33009 / NCIMB 11132 / Bath).